Here is a 185-residue protein sequence, read N- to C-terminus: Ribosome-recycling factor (185 aa).

It belongs to the RRF family.

The protein localises to the cytoplasm. Responsible for the release of ribosomes from messenger RNA at the termination of protein biosynthesis. May increase the efficiency of translation by recycling ribosomes from one round of translation to another. This Methylococcus capsulatus (strain ATCC 33009 / NCIMB 11132 / Bath) protein is Ribosome-recycling factor.